A 630-amino-acid polypeptide reads, in one-letter code: Putative adenylate cyclase regulatory protein (630 aa).

The RING-type zinc-finger motif lies at 10–46; the sequence is CAVCREPWAEGALELFPCRHVFCTVCVVERWRCPSCQ. LRR repeat units lie at residues 184–206, 207–230, 231–251, 255–277, 278–301, 302–324, 325–347, 348–370, 371–393, 394–416, 417–439, 440–462, 463–485, 486–508, 509–531, 532–554, 555–577, and 578–599; these read FLVH…CRLK, TLEA…CALP, QLTS…RCIH, KLKV…GGMR, SLEK…CKFS, NLRE…KNLI, NLKV…ERLV, NLDK…ANLS, NLKE…QDLN, NLEV…KNLS, KMRE…ETLK, GLEE…WSLH, HLRV…EGIT, GLEE…WNLR, NVCV…QCLT, GLEE…GNLR, NLKC…DRLV, and NLEK…MELM.

Its function is as follows. May interact with adenylate cyclase to regulate its activity. Functionally, may be involved in the postranscriptional regulation of genes in VSG expression sites. This Trypanosoma equiperdum protein is Putative adenylate cyclase regulatory protein (ESAG8C).